Reading from the N-terminus, the 666-residue chain is DNA ligase (666 aa).

NAD(+)-binding positions include 31–35 (DYDFD), 80–81 (SL), and Glu-111. Lys-113 serves as the catalytic N6-AMP-lysine intermediate. Positions 134, 170, 285, and 309 each coordinate NAD(+). Zn(2+) contacts are provided by Cys-403, Cys-406, Cys-421, and Cys-427. The 80-residue stretch at 587-666 (VVSNKLLGKI…ESDFSALLTS (80 aa)) folds into the BRCT domain.

The protein belongs to the NAD-dependent DNA ligase family. LigA subfamily. Mg(2+) is required as a cofactor. Requires Mn(2+) as cofactor.

The catalysed reaction is NAD(+) + (deoxyribonucleotide)n-3'-hydroxyl + 5'-phospho-(deoxyribonucleotide)m = (deoxyribonucleotide)n+m + AMP + beta-nicotinamide D-nucleotide.. Functionally, DNA ligase that catalyzes the formation of phosphodiester linkages between 5'-phosphoryl and 3'-hydroxyl groups in double-stranded DNA using NAD as a coenzyme and as the energy source for the reaction. It is essential for DNA replication and repair of damaged DNA. This is DNA ligase from Flavobacterium psychrophilum (strain ATCC 49511 / DSM 21280 / CIP 103535 / JIP02/86).